The chain runs to 742 residues: Photosystem I P700 chlorophyll a apoprotein A2 (742 aa).

8 helical membrane passes run 46–69 (LFST…FHIA), 135–158 (LFQA…LHLQ), 175–199 (LNHH…HVAI), 273–291 (IAHH…GHMY), 336–359 (LHFQ…QHMG), 375–401 (SALY…IFFV), 423–445 (ALIS…IYVH), and 525–543 (FLVH…LILI). [4Fe-4S] cluster-binding residues include Cys567 and Cys576. Transmembrane regions (helical) follow at residues 583 to 604 (AMYL…YWHW) and 651 to 673 (LSPW…MFLI). Divinyl chlorophyll a is bound by residues His662, Met670, and Tyr678. Trp679 contributes to the phylloquinone binding site. The chain crosses the membrane as a helical span at residues 715-735 (LVGLAHFTIGNILTFGAFVIA).

Belongs to the PsaA/PsaB family. The PsaA/B heterodimer binds the P700 divinyl chlorophyll special pair and subsequent electron acceptors. PSI consists of a core antenna complex that captures photons, and an electron transfer chain that converts photonic excitation into a charge separation. The cyanobacterial PSI reaction center is composed of one copy each of PsaA,B,C,D,E,F,I,J,K,L,M and X, and forms trimeric complexes. The cofactor is PSI electron transfer chain: 5 divinyl chlorophyll a, 1 divinyl chlorophyll a', 2 phylloquinones and 3 4Fe-4S clusters. PSI core antenna: 90 divinyl chlorophyll a, 22 carotenoids, 3 phospholipids and 1 galactolipid. P700 is a divinyl chlorophyll a/divinyl chlorophyll a' dimer, A0 is one or more divinyl chlorophyll a, A1 is one or both phylloquinones and FX is a shared 4Fe-4S iron-sulfur center..

Its subcellular location is the cellular thylakoid membrane. It carries out the reaction reduced [plastocyanin] + hnu + oxidized [2Fe-2S]-[ferredoxin] = oxidized [plastocyanin] + reduced [2Fe-2S]-[ferredoxin]. In terms of biological role, psaA and PsaB bind P700, the primary electron donor of photosystem I (PSI), as well as the electron acceptors A0, A1 and FX. PSI is a plastocyanin/cytochrome c6-ferredoxin oxidoreductase, converting photonic excitation into a charge separation, which transfers an electron from the donor P700 chlorophyll pair to the spectroscopically characterized acceptors A0, A1, FX, FA and FB in turn. Oxidized P700 is reduced on the lumenal side of the thylakoid membrane by plastocyanin or cytochrome c6. This Prochlorococcus marinus (strain MIT 9301) protein is Photosystem I P700 chlorophyll a apoprotein A2.